Here is a 1372-residue protein sequence, read N- to C-terminus: DNA-directed RNA polymerase subunit beta (1372 aa).

Belongs to the RNA polymerase beta chain family. In terms of assembly, the RNAP catalytic core consists of 2 alpha, 1 beta, 1 beta' and 1 omega subunit. When a sigma factor is associated with the core the holoenzyme is formed, which can initiate transcription.

It carries out the reaction RNA(n) + a ribonucleoside 5'-triphosphate = RNA(n+1) + diphosphate. DNA-dependent RNA polymerase catalyzes the transcription of DNA into RNA using the four ribonucleoside triphosphates as substrates. This chain is DNA-directed RNA polymerase subunit beta, found in Psychrobacter cryohalolentis (strain ATCC BAA-1226 / DSM 17306 / VKM B-2378 / K5).